A 168-amino-acid chain; its full sequence is ATP synthase subunit b (168 aa).

A helical membrane pass occupies residues leucine 9 to leucine 29.

It belongs to the ATPase B chain family. F-type ATPases have 2 components, F(1) - the catalytic core - and F(0) - the membrane proton channel. F(1) has five subunits: alpha(3), beta(3), gamma(1), delta(1), epsilon(1). F(0) has three main subunits: a(1), b(2) and c(10-14). The alpha and beta chains form an alternating ring which encloses part of the gamma chain. F(1) is attached to F(0) by a central stalk formed by the gamma and epsilon chains, while a peripheral stalk is formed by the delta and b chains.

It is found in the cell membrane. In terms of biological role, f(1)F(0) ATP synthase produces ATP from ADP in the presence of a proton or sodium gradient. F-type ATPases consist of two structural domains, F(1) containing the extramembraneous catalytic core and F(0) containing the membrane proton channel, linked together by a central stalk and a peripheral stalk. During catalysis, ATP synthesis in the catalytic domain of F(1) is coupled via a rotary mechanism of the central stalk subunits to proton translocation. Functionally, component of the F(0) channel, it forms part of the peripheral stalk, linking F(1) to F(0). The chain is ATP synthase subunit b from Caldanaerobacter subterraneus subsp. tengcongensis (strain DSM 15242 / JCM 11007 / NBRC 100824 / MB4) (Thermoanaerobacter tengcongensis).